The following is a 451-amino-acid chain: Chromosomal replication initiator protein DnaA (451 aa).

A domain I, interacts with DnaA modulators region spans residues Met-1–Tyr-71. A domain II region spans residues Tyr-71–Glu-112. The domain III, AAA+ region stretch occupies residues Gln-113–Ser-329. ATP-binding residues include Gly-157, Gly-159, Lys-160, and Thr-161. The interval Lys-330–Gln-451 is domain IV, binds dsDNA.

It belongs to the DnaA family. As to quaternary structure, oligomerizes as a right-handed, spiral filament on DNA at oriC.

The protein resides in the cytoplasm. In terms of biological role, plays an essential role in the initiation and regulation of chromosomal replication. ATP-DnaA binds to the origin of replication (oriC) to initiate formation of the DNA replication initiation complex once per cell cycle. Binds the DnaA box (a 9 base pair repeat at the origin) and separates the double-stranded (ds)DNA. Forms a right-handed helical filament on oriC DNA; dsDNA binds to the exterior of the filament while single-stranded (ss)DNA is stabiized in the filament's interior. The ATP-DnaA-oriC complex binds and stabilizes one strand of the AT-rich DNA unwinding element (DUE), permitting loading of DNA polymerase. After initiation quickly degrades to an ADP-DnaA complex that is not apt for DNA replication. Binds acidic phospholipids. This chain is Chromosomal replication initiator protein DnaA, found in Staphylococcus epidermidis (strain ATCC 35984 / DSM 28319 / BCRC 17069 / CCUG 31568 / BM 3577 / RP62A).